Consider the following 136-residue polypeptide: Histone H3 (136 aa).

The tract at residues 1–43 is disordered; the sequence is MARTKQTARKNVGGKAPRKHIGQKSARKTASTTAGMKKPHRYR. Lysine 10 is subject to N6-methylated lysine. 2 positions are modified to N6-acetyllysine: lysine 15 and lysine 24. A compositionally biased stretch (basic residues) spans 16–27; sequence APRKHIGQKSAR. N6-methylated lysine occurs at positions 28 and 37.

The protein belongs to the histone H3 family. The nucleosome is a histone octamer containing two molecules each of H2A, H2B, H3 and H4 assembled in one H3-H4 heterotetramer and two H2A-H2B heterodimers. The octamer wraps approximately 147 bp of DNA.

The protein resides in the nucleus. Its subcellular location is the chromosome. Core component of nucleosome. Nucleosomes wrap and compact DNA into chromatin, limiting DNA accessibility to the cellular machineries which require DNA as a template. Histones thereby play a central role in transcription regulation, DNA repair, DNA replication and chromosomal stability. DNA accessibility is regulated via a complex set of post-translational modifications of histones, also called histone code, and nucleosome remodeling. In Euplotes crassus, this protein is Histone H3.